The chain runs to 686 residues: Leucine-rich repeat-containing protein 49 (686 aa).

LRR repeat units lie at residues 113–134, 135–156, 157–178, 179–200, 201–222, 223–244, and 245–266; these read HLRL…SNLQ, RLIF…STLK, SLRV…ENLK, NLDV…NHLC, DLRV…NGLD, SLTE…DNLP, and CLQR…SCLA. One can recognise an LRRCT domain in the interval 279 to 317; the sequence is NPIAQESWYKHTVLQNMMQLRQLDMKRITEEERRVASVV. 2 disordered regions span residues 311–332 and 359–381; these read RRVA…HKQS and ASTQ…DGGN. Residues 319–341 are a coiled coil; that stretch reads KKEEEKKRESHKQSLLKEKKRLT.

As to quaternary structure, part of the neuronal tubulin polyglutamylase complex which contains TPGS1, TPGS2, TTLL1, LRRC49 and NICN1. Interacts with PCM1; TTLL1, TPGS1, TPGS2 and LRRC49.

It localises to the cytoplasm. Its subcellular location is the cytoskeleton. The protein localises to the microtubule organizing center. The protein resides in the centrosome. It is found in the centriolar satellite. Its function is as follows. Subunit of the tubulin polyglutamylase complex (TPGC). The complex mediates cilia and flagella polyglutamylation which is essential for their biogenesis and motility. The sequence is that of Leucine-rich repeat-containing protein 49 (Lrrc49) from Mus musculus (Mouse).